Reading from the N-terminus, the 121-residue chain is Two-component response regulator ORR12 (121 aa).

The Response regulatory domain maps to 5–121 (HVLVVDDTLV…VDLPRILNYI (117 aa)). Position 55 is a 4-aspartylphosphate (Asp-55).

Belongs to the ARR family. Type-A subfamily. Post-translationally, two-component system major event consists of a His-to-Asp phosphorelay between a sensor histidine kinase (HK) and a response regulator (RR). In plants, the His-to-Asp phosphorelay involves an additional intermediate named Histidine-containing phosphotransfer protein (HPt). This multistep phosphorelay consists of a His-Asp-His-Asp sequential transfer of a phosphate group between first a His and an Asp of the HK protein, followed by the transfer to a conserved His of the HPt protein and finally the transfer to an Asp in the receiver domain of the RR protein. As to expression, expressed in flowers and panicles.

In terms of biological role, functions as a response regulator involved in His-to-Asp phosphorelay signal transduction system. Phosphorylation of the Asp residue in the receiver domain activates the ability of the protein to promote the transcription of target genes. Type-A response regulators seem to act as negative regulators of the cytokinin signaling. The chain is Two-component response regulator ORR12 from Oryza sativa subsp. japonica (Rice).